Here is a 273-residue protein sequence, read N- to C-terminus: Large ribosomal subunit protein uL2 (273 aa).

The disordered stretch occupies residues 221–262 (RGTAMNPVDHPHGGGEGRNFGKHPVTPWGVQTKGKKTRHNKR). A compositionally biased stretch (basic residues) spans 253 to 262 (KGKKTRHNKR).

Belongs to the universal ribosomal protein uL2 family. As to quaternary structure, part of the 50S ribosomal subunit. Forms a bridge to the 30S subunit in the 70S ribosome.

One of the primary rRNA binding proteins. Required for association of the 30S and 50S subunits to form the 70S ribosome, for tRNA binding and peptide bond formation. It has been suggested to have peptidyltransferase activity; this is somewhat controversial. Makes several contacts with the 16S rRNA in the 70S ribosome. In Haemophilus influenzae (strain ATCC 51907 / DSM 11121 / KW20 / Rd), this protein is Large ribosomal subunit protein uL2.